The following is a 448-amino-acid chain: UDP-N-acetylmuramoylalanine--D-glutamate ligase (448 aa).

116–122 (GSNAKST) serves as a coordination point for ATP.

Belongs to the MurCDEF family.

It is found in the cytoplasm. The catalysed reaction is UDP-N-acetyl-alpha-D-muramoyl-L-alanine + D-glutamate + ATP = UDP-N-acetyl-alpha-D-muramoyl-L-alanyl-D-glutamate + ADP + phosphate + H(+). It participates in cell wall biogenesis; peptidoglycan biosynthesis. Cell wall formation. Catalyzes the addition of glutamate to the nucleotide precursor UDP-N-acetylmuramoyl-L-alanine (UMA). This chain is UDP-N-acetylmuramoylalanine--D-glutamate ligase, found in Pseudomonas syringae pv. tomato (strain ATCC BAA-871 / DC3000).